A 212-amino-acid polypeptide reads, in one-letter code: Anaphase-promoting complex subunit 10 (212 aa).

Residues 12–196 (MDEEERTSSR…PSAVLEARPG (185 aa)) form the DOC domain.

This sequence belongs to the APC10 family. As to quaternary structure, the APC/C complex is probably composed of at least 12 subunits: apc-2, apc-10, apc-11, cdc-26, emb-1, emb-27, emb-30, mat-1, mat-2, mat-3, such-1 and gfi-3.

The protein operates within protein modification; protein ubiquitination. Functionally, probable component of the anaphase promoting complex/cyclosome (APC/C), a cell cycle-regulated E3 ubiquitin ligase that controls progression through mitosis and the G1 phase of the cell cycle. The APC/C complex acts by mediating ubiquitination and subsequent degradation of target proteins. The protein is Anaphase-promoting complex subunit 10 of Caenorhabditis elegans.